The sequence spans 72 residues: Caerin-regulated peptide (72 aa).

The first 22 residues, 1 to 22, serve as a signal peptide directing secretion; the sequence is MAFLKKSLLLVLFLGLVSLSIC. A propeptide spanning residues 23 to 43 is cleaved from the precursor; sequence DEEKRENEDEEEQEDDEQSEE. The segment at 24–46 is disordered; it reads EEKRENEDEEEQEDDEQSEEKRG. Acidic residues predominate over residues 30–41; that stretch reads EDEEEQEDDEQS.

As to expression, expressed by the skin glands.

The protein resides in the secreted. Its function is as follows. Has antibacterial activity against Gram-positive bacterium M.luteus NCT C2665 and against Gram-negative bacterium E.coli K12D31. This chain is Caerin-regulated peptide, found in Agalychnis callidryas (Red-eyed tree frog).